Reading from the N-terminus, the 234-residue chain is Methylamine utilization ferredoxin-type protein MauM (234 aa).

4Fe-4S ferredoxin-type domains follow at residues 61 to 91, 98 to 131, 140 to 176, and 184 to 215; these read ALAEKDFQSACVRCGLCVEDCPFDILKLASW, GTPFFTARDEPCRMCQDIPCVRACPTGALNPLLT, VAVLVDHETCLNYKGLNCSICVRVCPIRGEAISLKPI, and QIPTVDSTKCTGCGTCEKHCVLSEAAIRVLPR. The [4Fe-4S] cluster site is built by Cys71, Cys74, Cys77, Cys81, Cys109, Cys112, Cys117, Cys121, Cys149, Cys157, Cys160, Cys164, Cys193, Cys196, Cys199, and Cys203.

It functions in the pathway one-carbon metabolism; methylamine degradation. In terms of biological role, involved in electron transfer. This Methylobacillus flagellatus (strain ATCC 51484 / DSM 6875 / VKM B-1610 / KT) protein is Methylamine utilization ferredoxin-type protein MauM (mauM).